Consider the following 234-residue polypeptide: Sugar fermentation stimulation protein homolog (234 aa).

This sequence belongs to the SfsA family.

This Shewanella pealeana (strain ATCC 700345 / ANG-SQ1) protein is Sugar fermentation stimulation protein homolog.